The primary structure comprises 350 residues: Methylthioribose-1-phosphate isomerase (350 aa).

Substrate is bound by residues 48-50 (RGA), arginine 93, and glutamine 198. Aspartate 239 serves as the catalytic Proton donor. A substrate-binding site is contributed by 249 to 250 (NK).

The protein belongs to the eIF-2B alpha/beta/delta subunits family. MtnA subfamily.

It catalyses the reaction 5-(methylsulfanyl)-alpha-D-ribose 1-phosphate = 5-(methylsulfanyl)-D-ribulose 1-phosphate. It participates in amino-acid biosynthesis; L-methionine biosynthesis via salvage pathway; L-methionine from S-methyl-5-thio-alpha-D-ribose 1-phosphate: step 1/6. Catalyzes the interconversion of methylthioribose-1-phosphate (MTR-1-P) into methylthioribulose-1-phosphate (MTRu-1-P). This is Methylthioribose-1-phosphate isomerase from Fervidobacterium nodosum (strain ATCC 35602 / DSM 5306 / Rt17-B1).